Consider the following 416-residue polypeptide: Tiggy-winkle hedgehog protein (416 aa).

The first 26 residues, 1 to 26 (MDVRLHLKQFALLCFISLLLTPCGLA), serve as a signal peptide directing secretion. A lipid anchor (N-palmitoyl cysteine) is attached at Cys-27. Residues Glu-92, Glu-93, Asp-98, Thr-128, Glu-129, Asp-132, and Asp-134 each coordinate Ca(2+). 3 residues coordinate Zn(2+): His-143, Asp-150, and His-185. Gly-200 carries Cholesterol glycine ester lipidation.

Belongs to the hedgehog family. As to quaternary structure, multimer. Interacts with HHATL/GUP1 which negatively regulates HHAT-mediated palmitoylation of the TWHH N-terminus. Interacts with BOC and CDON. Interacts with HHIP. Interacts with DISP1 via its cholesterol anchor. Interacts with SCUBE2. Post-translationally, the C-terminal domain displays an autoproteolysis activity and a cholesterol transferase activity. Both activities result in the cleavage of the full-length protein into two parts (N-product and C-product) followed by the covalent attachment of a cholesterol moiety to the C-terminal of the newly generated N-product. Cholesterylation is required for the tiggy-winkle hedgehog protein N-product targeting to lipid rafts and multimerization. N-product is the active species in both local and long-range signaling, whereas the C-product is degraded in the endoplasmic reticulum. N-palmitoylation by HHAT of N-product is required for tiggy-winkle hedgehog protein N-product multimerization and full activity. It is a prerequisite for the membrane-proximal positioning and the subsequent shedding of this N-terminal peptide. In terms of processing, the lipidated N- and C-terminal peptides of N-product can be cleaved (shedding). The N-terminal palmitoylated peptide is cleaved at the Cardin-Weintraub (CW) motif site. The cleavage reduced the interactions with heparan sulfate. The cleavage is enhanced by SCUBE2. As to expression, expressed in the ventral midline of the neural tube and brain. In the developing brain, expression occurs in domains that include a discrete region in the floor of the diencephalon. Not detected in the notochord or developing fin bud.

The protein localises to the cell membrane. The protein resides in the endoplasmic reticulum membrane. It localises to the golgi apparatus membrane. Functionally, the C-terminal part of the tiggy-winkle hedgehog protein precursor displays an autoproteolysis and a cholesterol transferase activity. Both activities result in the cleavage of the full-length protein into two parts (N-product and C-product) followed by the covalent attachment of a cholesterol moiety to the C-terminal of the newly generated N-product. Both activities occur in the endoplasmic reticulum. Once cleaved, the C-product is degraded in the endoplasmic reticulum. The dually lipidated tiggy-winkle hedgehog protein N-product is a morphogen which is essential for a variety of patterning events during development. Involved in dorso-ventral patterning of the brain and in early patterning of the developing eyes. Binds to the patched (PTCH1) receptor, which functions in association with smoothened (SMO), to activate the transcription of target genes. This is Tiggy-winkle hedgehog protein (shhb) from Danio rerio (Zebrafish).